The following is a 736-amino-acid chain: 1,4-alpha-glucan branching enzyme GlgB 2 (736 aa).

Catalysis depends on Asp415, which acts as the Nucleophile. Glu468 (proton donor) is an active-site residue.

This sequence belongs to the glycosyl hydrolase 13 family. GlgB subfamily. As to quaternary structure, monomer.

The catalysed reaction is Transfers a segment of a (1-&gt;4)-alpha-D-glucan chain to a primary hydroxy group in a similar glucan chain.. It participates in glycan biosynthesis; glycogen biosynthesis. Its function is as follows. Catalyzes the formation of the alpha-1,6-glucosidic linkages in glycogen by scission of a 1,4-alpha-linked oligosaccharide from growing alpha-1,4-glucan chains and the subsequent attachment of the oligosaccharide to the alpha-1,6 position. This is 1,4-alpha-glucan branching enzyme GlgB 2 from Rhizobium johnstonii (strain DSM 114642 / LMG 32736 / 3841) (Rhizobium leguminosarum bv. viciae).